The chain runs to 717 residues: Inhibitor of nuclear factor kappa-B kinase subunit epsilon (717 aa).

In terms of domain architecture, Protein kinase spans 9 to 315 (WHTDDLLGQG…LQRTVIHVFS (307 aa)). Residue 15–23 (LGQGATASV) participates in ATP binding. Lys30 participates in a covalent cross-link: Glycyl lysine isopeptide (Lys-Gly) (interchain with G-Cter in ubiquitin). Lys38 is an ATP binding site. Catalysis depends on Asp135, which acts as the Proton acceptor. Ser172 is modified (phosphoserine; by autocatalysis and IKKB). Lys231 is covalently cross-linked (Glycyl lysine isopeptide (Lys-Gly) (interchain with G-Cter in SUMO1)). The segment at 385 to 650 (SSDTPKGLAF…AQESLNKIFD (266 aa)) is interaction with DDX3X. A Glycyl lysine isopeptide (Lys-Gly) (interchain with G-Cter in ubiquitin) cross-link involves residue Lys403. The segment at 452–473 (LQDTCQQTLEVTRTALLYLSSS) is leucine-zipper. Phosphothreonine is present on Thr503. Ser665 is modified (phosphoserine).

This sequence belongs to the protein kinase superfamily. Ser/Thr protein kinase family. I-kappa-B kinase subfamily. As to quaternary structure, homodimer. Interacts with MAVS/IPS1. Interacts (via protein kinase domain) with TTLL12 (via N-terminus); the interaction prevents MAVS binding to IKBKE. Interacts with the adapter proteins AZI2/NAP1, TANK and TBKBP1/SINTBAD. Interacts with SIKE1. Interacts with TICAM1/TRIF, IRF3 and RIGI; interactions are disrupted by the interaction between IKBKE and SIKE1. Interacts with TOPORS; induced by DNA damage. Interacts with CYLD, IKBKB, IKBKG and MYD88. Interacts with IFIH1. Interacts with DDX3X; the interaction may be induced upon virus infection. Interacts with TRIM6 (via SPRY box). Interacts with unanchored K48-linked polyubiquitin chains; this leads to IKBKE activation. Interacts with TBK1. Interacts with FKBP5. Sumoylation by TOPORS upon DNA damage is required for protection of cells against DNA damage-induced cell death. Desumoylated by SENP1. In terms of processing, autophosphorylated and phosphorylated by IKBKB/IKKB. Phosphorylation at Ser-172 is enhanced by the interaction with DDX3X. Phosphorylated at Thr-503 upon IFN activation. Post-translationally, 'Lys-63'-linked polyubiquitinated at Lys-30 and Lys-403 by TRAF2:BIRC2 and TRAF2:BIRC3 complexes. Ubiquitination is induced by LPS, TNFA and interleukin-1 and required for full kinase activity and KF-kappa-B pathway activation. As to expression, expressed in bone marrow-derived macrophages and at low levels in liver and white adipose tissue (at protein level). Detected in muscle and lung.

It localises to the cytoplasm. The protein resides in the nucleus. It is found in the PML body. The catalysed reaction is L-seryl-[I-kappa-B protein] + ATP = O-phospho-L-seryl-[I-kappa-B protein] + ADP + H(+). Its activity is regulated as follows. Kinase activity is inhibited competitively by amlexanox. Functionally, serine/threonine kinase that plays an essential role in regulating inflammatory responses to viral infection, through the activation of the type I IFN, NF-kappa-B and STAT signaling. Also involved in TNFA and inflammatory cytokines, like Interleukin-1, signaling. Following activation of viral RNA sensors, such as RIG-I-like receptors, associates with DDX3X and phosphorylates interferon regulatory factors (IRFs), IRF3 and IRF7, as well as DDX3X. This activity allows subsequent homodimerization and nuclear translocation of the IRF3 leading to transcriptional activation of pro-inflammatory and antiviral genes including IFNB. In order to establish such an antiviral state, IKBKE forms several different complexes whose composition depends on the type of cell and cellular stimuli. Thus, several scaffolding molecules including IPS1/MAVS, TANK, AZI2/NAP1 or TBKBP1/SINTBAD can be recruited to the IKBKE-containing-complexes. Activated by polyubiquitination in response to TNFA and interleukin-1, regulates the NF-kappa-B signaling pathway through, at least, the phosphorylation of CYLD. Phosphorylates inhibitors of NF-kappa-B thus leading to the dissociation of the inhibitor/NF-kappa-B complex and ultimately the degradation of the inhibitor. In addition, is also required for the induction of a subset of ISGs which displays antiviral activity, may be through the phosphorylation of STAT1 at 'Ser-708'. Phosphorylation of STAT1 at 'Ser-708' also seems to promote the assembly and DNA binding of ISGF3 (STAT1:STAT2:IRF9) complexes compared to GAF (STAT1:STAT1) complexes, in this way regulating the balance between type I and type II IFN responses. Protects cells against DNA damage-induced cell death. Also plays an important role in energy balance regulation by sustaining a state of chronic, low-grade inflammation in obesity, wich leads to a negative impact on insulin sensitivity. Phosphorylates AKT1. The chain is Inhibitor of nuclear factor kappa-B kinase subunit epsilon (Ikbke) from Mus musculus (Mouse).